The following is a 541-amino-acid chain: Chaperonin GroEL 1 (541 aa).

ATP contacts are provided by residues 29–32 (TLGP), 86–90 (DGTTT), Gly413, 478–480 (NAA), and Asp494. A disordered region spans residues 520–541 (VVEKPAEAEDDGHGHGHGHHHH). Positions 523–533 (KPAEAEDDGHG) are enriched in basic and acidic residues.

It belongs to the chaperonin (HSP60) family. In terms of assembly, forms a cylinder of 14 subunits composed of two heptameric rings stacked back-to-back. Interacts with the co-chaperonin GroES.

The protein resides in the cytoplasm. The enzyme catalyses ATP + H2O + a folded polypeptide = ADP + phosphate + an unfolded polypeptide.. Together with its co-chaperonin GroES, plays an essential role in assisting protein folding. The GroEL-GroES system forms a nano-cage that allows encapsulation of the non-native substrate proteins and provides a physical environment optimized to promote and accelerate protein folding. The chain is Chaperonin GroEL 1 from Mycolicibacterium gilvum (strain PYR-GCK) (Mycobacterium gilvum (strain PYR-GCK)).